The primary structure comprises 77 residues: MKLTCMMIVAVLFLTANTFVTADDSGNGMENLFPKAGHEMENLEASNRGKPCHEEGQLCDPFLQNCCLGWNCVFVCI.

The signal sequence occupies residues 1-22; that stretch reads MKLTCMMIVAVLFLTANTFVTA. Positions 23–47 are excised as a propeptide; that stretch reads DDSGNGMENLFPKAGHEMENLEASN. 3 cysteine pairs are disulfide-bonded: Cys52–Cys66, Cys59–Cys72, and Cys67–Cys76.

Expressed by the venom duct.

Its subcellular location is the secreted. In Conus victoriae (Queen Victoria cone), this protein is Conotoxin Vc6b.